The sequence spans 379 residues: Glutamate 5-kinase (379 aa).

Lys-19 provides a ligand contact to ATP. Residues Ser-59, Asp-146, and Asn-158 each contribute to the substrate site. ATP is bound by residues 178–179 (TD) and 220–226 (TGGMATK). The region spanning 285-363 (SGDIIIDDGA…KDIISILGHD (79 aa)) is the PUA domain.

It belongs to the glutamate 5-kinase family.

Its subcellular location is the cytoplasm. It catalyses the reaction L-glutamate + ATP = L-glutamyl 5-phosphate + ADP. It participates in amino-acid biosynthesis; L-proline biosynthesis; L-glutamate 5-semialdehyde from L-glutamate: step 1/2. Functionally, catalyzes the transfer of a phosphate group to glutamate to form L-glutamate 5-phosphate. This is Glutamate 5-kinase from Vibrio parahaemolyticus serotype O3:K6 (strain RIMD 2210633).